The sequence spans 845 residues: Protein SEY1 (845 aa).

Residues 1–29 (MELNVDSAKQLLAEHEQELQSAHDAHSIL) adopt a coiled-coil conformation. At 1-749 (MELNVDSAKQ…KRATVSSIAQ (749 aa)) the chain is on the cytoplasmic side. The 223-residue stretch at 112-334 (GFGYDLCAVL…DPNFVFKTEY (223 aa)) folds into the GB1/RHD3-type G domain. 122-129 (GSQSTGKS) contributes to the GTP binding site. A helical transmembrane segment spans residues 750-770 (VPLWMYGVMLVLGWNELMAIL). At 771–773 (SSP) the chain is on the lumenal side. A helical membrane pass occupies residues 774 to 794 (VYFAFLLVLIASAYIVWRLNL). Over 795-845 (SGPLISVLRAVANEVHRLADAQLRTHFSQPLREPRPPAESRPAEQIELEPN) the chain is Cytoplasmic. Positions 823 to 845 (QPLREPRPPAESRPAEQIELEPN) are disordered. Over residues 826–838 (REPRPPAESRPAE) the composition is skewed to basic and acidic residues.

Belongs to the TRAFAC class dynamin-like GTPase superfamily. GB1/RHD3 GTPase family. RHD3 subfamily.

It localises to the endoplasmic reticulum membrane. In terms of biological role, cooperates with the reticulon proteins and tubule-shaping DP1 family proteins to generate and maintain the structure of the tubular endoplasmic reticulum network. Has GTPase activity, which is required for its function in ER organization. This Mycosarcoma maydis (Corn smut fungus) protein is Protein SEY1.